The sequence spans 839 residues: Probable beta-glucosidase I (839 aa).

A glycan (N-linked (GlcNAc...) asparagine) is linked at Asn-197. Residue Asp-225 is part of the active site. Positions 396 to 556 constitute a PA14 domain; it reads DGKTGFKFRV…TQEELISKAV (161 aa). A glycan (N-linked (GlcNAc...) asparagine) is linked at Asn-494.

This sequence belongs to the glycosyl hydrolase 3 family.

It is found in the secreted. The enzyme catalyses Hydrolysis of terminal, non-reducing beta-D-glucosyl residues with release of beta-D-glucose.. Its pathway is glycan metabolism; cellulose degradation. Its function is as follows. Beta-glucosidases are one of a number of cellulolytic enzymes, and catalyze the last step releasing glucose from the inhibitory cellobiose. This is Probable beta-glucosidase I (bglI) from Emericella nidulans (strain FGSC A4 / ATCC 38163 / CBS 112.46 / NRRL 194 / M139) (Aspergillus nidulans).